The following is a 59-amino-acid chain: Large ribosomal subunit protein bL32 (59 aa).

The protein belongs to the bacterial ribosomal protein bL32 family.

This is Large ribosomal subunit protein bL32 from Synechococcus sp. (strain RCC307).